The chain runs to 1131 residues: Phytochrome (1131 aa).

A disordered region spans residues 1-30; the sequence is MASNSRHTQSQSTGSNNRRSSTNTNTTTNK. Over residues 9 to 29 the composition is skewed to low complexity; it reads QSQSTGSNNRRSSTNTNTTTN. A GAF domain is found at 227-406; it reads DVGLLCDTVV…ALGLQLNMEL (180 aa). A phytochromobilin-binding site is contributed by C332. PAS domains follow at residues 621–692 and 755–826; these read VASE…LRGE and DYRS…TIVL. Residues 903–1123 enclose the Histidine kinase domain; sequence YIRQEIKNPL…LVNVEFPMAQ (221 aa).

The protein belongs to the phytochrome family. As to quaternary structure, homodimer. Post-translationally, contains one covalently linked phytochromobilin chromophore.

Functionally, regulatory photoreceptor which exists in two forms that are reversibly interconvertible by light: the Pr form that absorbs maximally in the red region of the spectrum and the Pfr form that absorbs maximally in the far-red region. Photoconversion of Pr to Pfr induces an array of morphogenic responses, whereas reconversion of Pfr to Pr cancels the induction of those responses. Pfr controls the expression of a number of nuclear genes including those encoding the small subunit of ribulose-bisphosphate carboxylase, chlorophyll A/B binding protein, protochlorophyllide reductase, rRNA, etc. It also controls the expression of its own gene(s) in a negative feedback fashion. In Pinus sylvestris (Scotch pine), this protein is Phytochrome.